The primary structure comprises 1335 residues: Mediator of RNA polymerase II transcription subunit 15a (1335 aa).

8 disordered regions span residues 1-27 (MDNNNWRPSLPNGEPAMDTGDWRTQLP), 109-172 (GTSI…NNNT), 190-225 (QDSSGQHGLSSNMFSGPQRQMLGRPHAMSSQQQQQP), 241-389 (FQSG…QHQQ), 401-448 (IQQQ…TQSN), 496-525 (LYSSQGQQSQNQPSQQQMMPQLQSHHQQLG), 567-591 (SQRTLPEMPSSSLDSTAQTESANGG), and 683-815 (HRPR…QSNV). Composition is skewed to polar residues over residues 110-158 (TSID…TALP), 190-207 (QDSSGQHGLSSNMFSGPQ), and 241-257 (FQSGNVPNPNSLLPSHI). The span at 258-270 (QQQQQNVLQPNQL) shows a compositional bias: low complexity. Over residues 271-299 (HSSQQPGVPTSATQPSTVNSAPLQGLHTN) the composition is skewed to polar residues. The span at 300–314 (QQSSPQLSSQQTTQS) shows a compositional bias: low complexity. The span at 315–328 (MLRQHQSSMLRQHP) shows a compositional bias: polar residues. Residues 329-362 (QSQQASGIHQQQSSLPQQSISPLQQQPTQLMRQQ) are compositionally biased toward low complexity. The segment covering 363–374 (AANSSGIQQKQM) has biased composition (polar residues). Residues 401 to 436 (IQQQQSQQQPLQQPQQQQKQQPPAQQQLMSQQNSLQ) are compositionally biased toward low complexity. Positions 437-448 (ATHQNPLGTQSN) are enriched in polar residues. The segment covering 498-525 (SSQGQQSQNQPSQQQMMPQLQSHHQQLG) has biased composition (low complexity). Polar residues predominate over residues 567–588 (SQRTLPEMPSSSLDSTAQTESA). A compositionally biased stretch (low complexity) spans 688-712 (PVQQGQLPQSQMQPMQQPQSQTVQD). 3 stretches are compositionally biased toward polar residues: residues 716–728 (DNQTNPQMQSMSM), 735–749 (AQQSSMTNMQSNVLS), and 756–815 (APQQ…QSNV). Positions 834-882 (QDQQMQLKQQFQQRQMQQQQLQARQQQQQQQLQARQQAAQLQQMNDMND) form a coiled coil. 2 disordered regions span residues 947-986 (KMGTPLQPANSPFVVPSPSSTPLAPSPMQVDSEKPGSSSL) and 1146-1165 (FAGSETSDLESTATSDGKKA). The span at 957–973 (SPFVVPSPSSTPLAPSP) shows a compositional bias: low complexity. The span at 1148-1160 (GSETSDLESTATS) shows a compositional bias: polar residues.

It belongs to the plant Mediator complex subunit 15 family. As to quaternary structure, component of the Mediator complex.

Its subcellular location is the nucleus. Component of the Mediator complex, a coactivator involved in the regulated transcription of nearly all RNA polymerase II-dependent genes. Mediator functions as a bridge to convey information from gene-specific regulatory proteins to the basal RNA polymerase II transcription machinery. The Mediator complex, having a compact conformation in its free form, is recruited to promoters by direct interactions with regulatory proteins and serves for the assembly of a functional preinitiation complex with RNA polymerase II and the general transcription factors. This is Mediator of RNA polymerase II transcription subunit 15a (MED15A) from Arabidopsis thaliana (Mouse-ear cress).